Here is a 405-residue protein sequence, read N- to C-terminus: Imidazolonepropionase (405 aa).

Fe(3+) contacts are provided by His70 and His72. Positions 70 and 72 each coordinate Zn(2+). 4-imidazolone-5-propanoate-binding residues include Arg79, Tyr142, and His175. An N-formimidoyl-L-glutamate-binding site is contributed by Tyr142. His240 lines the Fe(3+) pocket. His240 lines the Zn(2+) pocket. Gln243 lines the 4-imidazolone-5-propanoate pocket. Fe(3+) is bound at residue Asp315. Asp315 is a Zn(2+) binding site. Residues Asn317 and Gly319 each contribute to the N-formimidoyl-L-glutamate site. Position 320 (Thr320) interacts with 4-imidazolone-5-propanoate.

It belongs to the metallo-dependent hydrolases superfamily. HutI family. It depends on Zn(2+) as a cofactor. Fe(3+) serves as cofactor.

The protein localises to the cytoplasm. The enzyme catalyses 4-imidazolone-5-propanoate + H2O = N-formimidoyl-L-glutamate. It participates in amino-acid degradation; L-histidine degradation into L-glutamate; N-formimidoyl-L-glutamate from L-histidine: step 3/3. Its function is as follows. Catalyzes the hydrolytic cleavage of the carbon-nitrogen bond in imidazolone-5-propanoate to yield N-formimidoyl-L-glutamate. It is the third step in the universal histidine degradation pathway. This is Imidazolonepropionase from Ectopseudomonas mendocina (strain ymp) (Pseudomonas mendocina).